A 589-amino-acid chain; its full sequence is Deoxynucleoside triphosphate triphosphohydrolase SAMHD1 (589 aa).

An N-acetylmethionine modification is found at Met1. The segment covering 1–10 (MQSADSQNTP) has biased composition (polar residues). The tract at residues 1–41 (MQSADSQNTPKRPRRDGSPRTPPDSPLADAETSPSHDLDPD) is disordered. Ser18 carries the phosphoserine modification. Thr21 carries the phosphothreonine modification. 2 positions are modified to phosphoserine: Ser33 and Ser88. The SAM domain occupies 45-100 (WGPEQVWSFLRRCGFSDSELLKRCREKRMSGSLLPFPEDLGISSHGKKMKLLNCIQ). 2 residues coordinate GTP: Lys104 and Val105. DGTP is bound at residue Asn107. Asp125, Gln130, and Arg133 together coordinate GTP. Residues Gln137, Leu138, Val144, and Arg152 each coordinate dGTP. DATP is bound at residue Gln137. Gln137 contributes to the dCTP binding site. Gln137 provides a ligand contact to dTTP. Arg152 lines the dATP pocket. Position 152 (Arg152) interacts with dCTP. Arg152 provides a ligand contact to dTTP. One can recognise an HD domain in the interval 152–277 (RFEHSLGVGY…IKDASKWLYK (126 aa)). Mn(2+) contacts are provided by His155, His194, and Asp195. Positions 198 and 203 each coordinate dATP. DCTP contacts are provided by His198 and His203. Residues His198 and His203 each coordinate dTTP. His221 is an active-site residue. Asp300 is a binding site for Mn(2+). Residues Lys301, Tyr304, Asp308, Arg322, Arg341, Lys343, Asn347, Arg355, Tyr363, Gln364, His365, and Lys366 each contribute to the dGTP site. Positions 301, 304, and 308 each coordinate dATP. The dCTP site is built by Lys301, Tyr304, and Asp308. Positions 301, 304, and 308 each coordinate dTTP. Residue Arg355 coordinates dATP. Arg355 contacts dCTP. A dATP-binding site is contributed by Gln364. Gln364 is a dCTP binding site. DTTP is bound at residue Gln364. GTP-binding residues include Arg440 and Lys444. Lys457 is covalently cross-linked (Glycyl lysine isopeptide (Lys-Gly) (interchain with G-Cter in SUMO2)). GTP is bound at residue Lys512. Residue Lys512 coordinates dGTP.

Belongs to the SAMHD1 family. As to quaternary structure, homodimer; in absence of GTP and dNTP. Homotetramer; in GTP- and dNTP-bound form. Interacts with MRE11; leading to stimulate the exonuclease activity of MRE11. Interacts with RBBP8/CtIP. Interacts (via its C-terminus) with CD81. The cofactor is Zn(2+).

It is found in the nucleus. The protein resides in the chromosome. The catalysed reaction is a 2'-deoxyribonucleoside 5'-triphosphate + H2O = a 2'-deoxyribonucleoside + triphosphate + H(+). It carries out the reaction dATP + H2O = 2'-deoxyadenosine + triphosphate + H(+). The enzyme catalyses dCTP + H2O = 2'-deoxycytidine + triphosphate + H(+). It catalyses the reaction dGTP + H2O = 2'-deoxyguanosine + triphosphate + H(+). The catalysed reaction is dTTP + H2O = thymidine + triphosphate + H(+). Its activity is regulated as follows. Allosterically activated and regulated via the combined actions of GTP and dNTPs (dATP, dGTP, dTTP and dCTP): Allosteric site 1 binds GTP, while allosteric site 2 binds dNTP. Allosteric activation promotes the formation of highly active homotetramers. Its function is as follows. Protein that acts both as a host restriction factor involved in defense response to virus and as a regulator of DNA end resection at stalled replication forks. Has deoxynucleoside triphosphate (dNTPase) activity, which is required to restrict infection by viruses: dNTPase activity reduces cellular dNTP levels to levels too low for retroviral reverse transcription to occur, blocking early-stage virus replication in dendritic and other myeloid cells. Likewise, suppresses LINE-1 retrotransposon activity. In addition to virus restriction, dNTPase activity acts as a regulator of DNA precursor pools by regulating dNTP pools. Functions during S phase at stalled DNA replication forks to promote the resection of gapped or reversed forks: acts by stimulating the exonuclease activity of MRE11, activating the ATR-CHK1 pathway and allowing the forks to restart replication. Its ability to promote degradation of nascent DNA at stalled replication forks is required to prevent induction of type I interferons, thereby preventing chronic inflammation. Ability to promote DNA end resection at stalled replication forks is independent of dNTPase activity. Enhances immunoglobulin hypermutation in B-lymphocytes by promoting transversion mutation. The protein is Deoxynucleoside triphosphate triphosphohydrolase SAMHD1 of Bos taurus (Bovine).